The chain runs to 467 residues: 3-isopropylmalate dehydratase large subunit (467 aa).

[4Fe-4S] cluster is bound by residues cysteine 349, cysteine 409, and cysteine 412. Residues 422–443 (PGQRSASTSNRNFEGRQGRGGR) form a disordered region.

Belongs to the aconitase/IPM isomerase family. LeuC type 1 subfamily. Heterodimer of LeuC and LeuD. [4Fe-4S] cluster is required as a cofactor.

It catalyses the reaction (2R,3S)-3-isopropylmalate = (2S)-2-isopropylmalate. It functions in the pathway amino-acid biosynthesis; L-leucine biosynthesis; L-leucine from 3-methyl-2-oxobutanoate: step 2/4. Functionally, catalyzes the isomerization between 2-isopropylmalate and 3-isopropylmalate, via the formation of 2-isopropylmaleate. The chain is 3-isopropylmalate dehydratase large subunit from Paramagnetospirillum magneticum (strain ATCC 700264 / AMB-1) (Magnetospirillum magneticum).